The primary structure comprises 258 residues: MMNPLIIKLGGVLLDSEEALERLFTALVNYRESHQRPLVIVHGGGCVVDELMKGLNLPVKKKDGLRVTPADQIGIITGALAGTANKTLLAWAKKHHIASVGLFLGDGDSVNVTQLDEALGHVGLAQPGSPKLINMLLENGFLPVVSSIGVTDDGQLMNVNADQAATALAATLGADLILLSDVSGILDGKGQRIAEMTASKAEQLIDQGIITDGMIVKVNAALDAARALGRPVDIASWRHAEQLPALFNGTPIGTRILA.

Substrate contacts are provided by residues 44–45, arginine 66, and asparagine 158; that span reads GG. ATP-binding positions include 181-186 and 209-211; these read DVSGIL and IIT.

This sequence belongs to the acetylglutamate kinase family. ArgB subfamily. In terms of assembly, homodimer.

The protein resides in the cytoplasm. It carries out the reaction N-acetyl-L-glutamate + ATP = N-acetyl-L-glutamyl 5-phosphate + ADP. It functions in the pathway amino-acid biosynthesis; L-arginine biosynthesis; N(2)-acetyl-L-ornithine from L-glutamate: step 2/4. In terms of biological role, catalyzes the ATP-dependent phosphorylation of N-acetyl-L-glutamate. The chain is Acetylglutamate kinase from Salmonella paratyphi A (strain ATCC 9150 / SARB42).